The following is a 347-amino-acid chain: NADH-ubiquinone oxidoreductase chain 2 (347 aa).

The next 11 membrane-spanning stretches (helical) occupy residues 1 to 21, 25 to 45, 59 to 79, 96 to 116, 122 to 142, 149 to 169, 178 to 198, 201 to 221, 237 to 257, 274 to 294, and 326 to 346; these read MNPM…FIVT, HWFM…PVLM, YFLT…INLM, MLIT…FWVP, VSLP…LSLL, VNMN…GWGG, IMAY…VYNP, SLLN…LLIF, APII…LPPL, NSVI…FFYM, and MLPL…LILL.

Belongs to the complex I subunit 2 family. In terms of assembly, core subunit of respiratory chain NADH dehydrogenase (Complex I) which is composed of 45 different subunits. Interacts with TMEM242.

The protein resides in the mitochondrion inner membrane. It catalyses the reaction a ubiquinone + NADH + 5 H(+)(in) = a ubiquinol + NAD(+) + 4 H(+)(out). Core subunit of the mitochondrial membrane respiratory chain NADH dehydrogenase (Complex I) that is believed to belong to the minimal assembly required for catalysis. Complex I functions in the transfer of electrons from NADH to the respiratory chain. The immediate electron acceptor for the enzyme is believed to be ubiquinone. This chain is NADH-ubiquinone oxidoreductase chain 2, found in Crocidura suaveolens gueldenstaedtii (Gueldenstaedt's shrew).